Consider the following 428-residue polypeptide: CRS2-associated factor 1, mitochondrial (428 aa).

The transit peptide at 1–21 directs the protein to the mitochondrion; that stretch reads MLLLAGLLRRARPPRRPSVRR. 2 disordered regions span residues 33 to 100 and 129 to 152; these read PPAS…REPK and HADD…RERV. 2 consecutive CRM domains span residues 155-253 and 275-371; these read EPLT…KRPV and EGLT…IQDN. The interval 378–428 is disordered; sequence SVLEEESAGAESENGDQEQASSDWASDECSQLSSSDEMPDDKSAISEADSD. The span at 380 to 393 shows a compositional bias: acidic residues; the sequence is LEEESAGAESENGD. Positions 394 to 413 are enriched in polar residues; the sequence is QEQASSDWASDECSQLSSSD.

Part of large ribonucleo-protein complexes that include group IIB introns.

It is found in the mitochondrion. In terms of biological role, may be involved in the splicing of group IIB introns in mitochondria. In Oryza sativa subsp. japonica (Rice), this protein is CRS2-associated factor 1, mitochondrial.